The following is a 395-amino-acid chain: Biotin biosynthesis cytochrome P450 (395 aa).

Arg-60 provides a ligand contact to substrate. Heme is bound at residue 89-93 (HRRLR). 169–173 (IDFTR) lines the substrate pocket. Cys-250 and Cys-275 are joined by a disulfide. 285–287 (TAR) is a heme binding site. Substrate is bound at residue Tyr-307. Heme-binding positions include 343-345 (HVC) and Cys-345.

Heme is required as a cofactor.

The catalysed reaction is a C2-C8-saturated long-chain fatty acyl-[ACP] + 2 reduced [flavodoxin] + 3 O2 = 6-carboxyhexanoyl-[ACP] + a fatty aldehyde + 2 oxidized [flavodoxin] + 3 H2O + 3 H(+). It participates in cofactor biosynthesis; biotin biosynthesis. Catalyzes the C-C bond cleavage of fatty acid linked to acyl carrier protein (ACP) to generate pimelic acid for biotin biosynthesis. It has high affinity for long-chain fatty acids with the greatest affinity for myristic acid. This Bacillus subtilis (strain 168) protein is Biotin biosynthesis cytochrome P450 (bioI).